A 431-amino-acid chain; its full sequence is 5'-deoxyadenosine deaminase (431 aa).

The Zn(2+) site is built by His65 and His67. Residues Glu94 and His185 each coordinate substrate. Zn(2+) is bound at residue His212. Positions 215 and 300 each coordinate substrate. Asp300 contributes to the Zn(2+) binding site.

This sequence belongs to the metallo-dependent hydrolases superfamily. MTA/SAH deaminase family. In terms of assembly, homotetramer. Zn(2+) is required as a cofactor.

It carries out the reaction 5'-deoxyadenosine + H2O + H(+) = 5'-deoxyinosine + NH4(+). The enzyme catalyses S-adenosyl-L-homocysteine + H2O + H(+) = S-inosyl-L-homocysteine + NH4(+). It catalyses the reaction S-methyl-5'-thioadenosine + H2O + H(+) = S-methyl-5'-thioinosine + NH4(+). The catalysed reaction is adenosine + H2O + H(+) = inosine + NH4(+). It participates in amino-acid biosynthesis; S-adenosyl-L-methionine biosynthesis. Its function is as follows. Catalyzes the deamination of three SAM-derived enzymatic products, namely 5'-deoxyadenosine, S-adenosyl-L-homocysteine, and 5'-methylthioadenosine, to produce the inosine analogs. Can also deaminate adenosine. The preferred substrate for this enzyme is 5'-deoxyadenosine, but all these substrates are efficiently deaminated. Likely functions in a S-adenosyl-L-methionine (SAM) recycling pathway from S-adenosyl-L-homocysteine (SAH) produced from SAM-dependent methylation reactions. May also be involved in the recycling of 5'-deoxyadenosine, whereupon the 5'-deoxyribose moiety of 5'-deoxyinosine is further metabolized to deoxyhexoses used for the biosynthesis of aromatic amino acids in methanogens. This is 5'-deoxyadenosine deaminase from Methanopyrus kandleri (strain AV19 / DSM 6324 / JCM 9639 / NBRC 100938).